We begin with the raw amino-acid sequence, 504 residues long: Maturase K (504 aa).

Belongs to the intron maturase 2 family. MatK subfamily.

Its subcellular location is the plastid. The protein localises to the chloroplast. Functionally, usually encoded in the trnK tRNA gene intron. Probably assists in splicing its own and other chloroplast group II introns. This Guizotia abyssinica (Niger) protein is Maturase K.